Consider the following 233-residue polypeptide: ATP synthase subunit a, chloroplastic (233 aa).

A run of 4 helical transmembrane segments spans residues 27–47 (VLLI…LGTL), 84–104 (VPFV…GALI), 122–142 (DINT…YAGF), and 192–212 (VLCL…GIFA).

It belongs to the ATPase A chain family. As to quaternary structure, F-type ATPases have 2 components, CF(1) - the catalytic core - and CF(0) - the membrane proton channel. CF(1) has five subunits: alpha(3), beta(3), gamma(1), delta(1), epsilon(1). CF(0) has four main subunits: a, b, b' and c.

The protein resides in the plastid. Its subcellular location is the chloroplast thylakoid membrane. Key component of the proton channel; it plays a direct role in the translocation of protons across the membrane. The polypeptide is ATP synthase subunit a, chloroplastic (Ochrosphaera neapolitana).